Consider the following 258-residue polypeptide: Acetylglutamate kinase (258 aa).

Substrate-binding positions include 44 to 45 (GG), arginine 66, and asparagine 158. Residues 181 to 186 (DVSGIL) and 209 to 211 (IIT) each bind ATP.

This sequence belongs to the acetylglutamate kinase family. ArgB subfamily. In terms of assembly, homodimer.

The protein resides in the cytoplasm. The enzyme catalyses N-acetyl-L-glutamate + ATP = N-acetyl-L-glutamyl 5-phosphate + ADP. It functions in the pathway amino-acid biosynthesis; L-arginine biosynthesis; N(2)-acetyl-L-ornithine from L-glutamate: step 2/4. In terms of biological role, catalyzes the ATP-dependent phosphorylation of N-acetyl-L-glutamate. In Citrobacter koseri (strain ATCC BAA-895 / CDC 4225-83 / SGSC4696), this protein is Acetylglutamate kinase.